Consider the following 821-residue polypeptide: DNA ligase (821 aa).

NAD(+)-binding positions include 33-37 (DVDYD), 82-83 (SL), and E113. K115 functions as the N6-AMP-lysine intermediate in the catalytic mechanism. R136, E173, K290, and K314 together coordinate NAD(+). Positions 408, 411, 426, and 432 each coordinate Zn(2+). A BRCT domain is found at 741–821 (IVAGPLDGQT…RLLAYLAEHE (81 aa)).

The protein belongs to the NAD-dependent DNA ligase family. LigA subfamily. It depends on Mg(2+) as a cofactor. The cofactor is Mn(2+).

The catalysed reaction is NAD(+) + (deoxyribonucleotide)n-3'-hydroxyl + 5'-phospho-(deoxyribonucleotide)m = (deoxyribonucleotide)n+m + AMP + beta-nicotinamide D-nucleotide.. Functionally, DNA ligase that catalyzes the formation of phosphodiester linkages between 5'-phosphoryl and 3'-hydroxyl groups in double-stranded DNA using NAD as a coenzyme and as the energy source for the reaction. It is essential for DNA replication and repair of damaged DNA. The polypeptide is DNA ligase (Stenotrophomonas maltophilia (strain K279a)).